The primary structure comprises 218 residues: Dehydration-responsive element-binding protein 1B (218 aa).

A disordered region spans residues 1–26 (MEVEEAAYRTVWSEPPKRPAGRTKFR). Residues 32 to 95 (VYRGVRRRGG…RGRAACLNFA (64 aa)) constitute a DNA-binding region (AP2/ERF). Residues 131–151 (SAAPSSPAETFANDGDEEEDN) form a disordered region.

The protein belongs to the AP2/ERF transcription factor family. ERF subfamily.

The protein resides in the nucleus. In terms of biological role, transcriptional activator that binds specifically to the DNA sequence 5'-[AG]CCGAC-3'. Binding to the C-repeat/DRE element mediates high salinity- and dehydration-inducible transcription. Confers resistance to high salt, cold and drought stress. The sequence is that of Dehydration-responsive element-binding protein 1B (DREB1B) from Oryza sativa subsp. japonica (Rice).